Reading from the N-terminus, the 1146-residue chain is Sodium/hydrogen exchanger 7 (1146 aa).

The Extracellular portion of the chain corresponds to 1–28; it reads MTTVIDATMAYRFLEEATDSSSSSSSSK. Residues 29–49 form a helical membrane-spanning segment; the sequence is LESSPVDAVLFVGMSLVLGIA. Over 50-58 the chain is Cytoplasmic; it reads SRHLLRGTR. A helical transmembrane segment spans residues 59 to 79; it reads VPYTVALLVIGIALGSLEYGA. Residues 80-99 lie on the Extracellular side of the membrane; sequence KHNLGKIGHGIRIWNEIDPE. A helical membrane pass occupies residues 100 to 120; it reads LLLAVFLPALLFESSFSMEVH. The Cytoplasmic segment spans residues 121–127; it reads QIKRCLG. A helical membrane pass occupies residues 128–148; the sequence is QMVLLAVPGVLISTACLGSLV. Topologically, residues 149 to 159 are extracellular; it reads KVTFPYEWDWK. The helical transmembrane segment at 160 to 180 threads the bilayer; it reads TSLLLGGLLSATDPVAVVALL. Topologically, residues 181–191 are cytoplasmic; the sequence is KELGASKKLST. The helical transmembrane segment at 192–212 threads the bilayer; the sequence is IIEGESLMNDGTAIVVFQLFL. Over 213–227 the chain is Extracellular; it reads KMAMGQNSDWSSIIK. Residues 228-250 traverse the membrane as a helical segment; sequence FLLKVALGAVGIGLAFGIASVIW. The Cytoplasmic portion of the chain corresponds to 251–253; it reads LKF. A helical membrane pass occupies residues 254–273; the sequence is IFNDTVIEITLTIAVSYFAY. Topologically, residues 274-278 are extracellular; it reads YTAQE. Residues 279–299 traverse the membrane as a helical segment; sequence WAGASGVLTVMTLGMFYAAFA. Over 300-313 the chain is Cytoplasmic; that stretch reads RTAFKGDSQKSLHH. Residues 314 to 334 form a helical membrane-spanning segment; the sequence is FWEMVAYIANTLIFILSGVVI. Topologically, residues 335–352 are extracellular; it reads AEGILDSDKIAYQGNSWR. Residues 353–373 form a helical membrane-spanning segment; the sequence is FLFLLYVYIQLSRVVVVGVLY. Residues 374–387 are Cytoplasmic-facing; sequence PLLCRFGYGLDWKE. Residues 388–408 form a helical membrane-spanning segment; sequence SIILVWSGLRGAVALALSLSV. At 409 to 420 the chain is on the extracellular side; sequence KQSSGNSHISKE. The helical transmembrane segment at 421-441 threads the bilayer; that stretch reads TGTLFLFFTGGIVFLTLIVNG. At 442–1146 the chain is on the cytoplasmic side; sequence STTQFVLRLL…PSKIVFRNDL (705 aa). 2 disordered regions span residues 981–1001 and 1102–1128; these read LHRR…QLQR and CQLP…DEDE. The span at 986-996 shows a compositional bias: low complexity; sequence SSLTPPRSSSS. A compositionally biased stretch (polar residues) spans 1109–1118; that stretch reads ESSTRQNTMV.

It belongs to the monovalent cation:proton antiporter 1 (CPA1) transporter (TC 2.A.36) family. In terms of assembly, interacts with CIPK24/SOS2 and CBL4/SOS3. Phosphorylated by CIPK24/SOS2 in complex with CBL4/SOS3. As to expression, more expressed in roots than in shoots. Mostly localized in parenchyma cells at the xylem/symplast boundary in roots, hypocotyls, stems and leaves. Also present in root tips epidermal cells.

The protein resides in the cell membrane. The catalysed reaction is Na(+)(in) + H(+)(out) = Na(+)(out) + H(+)(in). It catalyses the reaction K(+)(in) + H(+)(out) = K(+)(out) + H(+)(in). Acts in electroneutral exchange of protons for cations such as Na(+) or Li(+) across plasma membrane. Involved in Na(+) and K(+) homeostasis. Required for cytoplasmic Na(+) and Li(+) detoxification by secreting them from the cytoplasm to the extracellular space. Regulates Na(+) content of the xylem sap. This is Sodium/hydrogen exchanger 7 (NHX7) from Arabidopsis thaliana (Mouse-ear cress).